Consider the following 428-residue polypeptide: tRNA modification GTPase MnmE (428 aa).

Residues arginine 20, glutamate 77, and lysine 117 each contribute to the (6S)-5-formyl-5,6,7,8-tetrahydrofolate site. Positions 213–351 (GFEIALVGAP…LLEKIRSVFS (139 aa)) constitute a TrmE-type G domain. A K(+)-binding site is contributed by asparagine 223. GTP is bound by residues 223–228 (NAGKST), 242–248 (SEIAGTT), and 267–270 (DTAG). Serine 227 contacts Mg(2+). Residues serine 242, isoleucine 244, and threonine 247 each coordinate K(+). Threonine 248 is a Mg(2+) binding site. Lysine 428 lines the (6S)-5-formyl-5,6,7,8-tetrahydrofolate pocket.

It belongs to the TRAFAC class TrmE-Era-EngA-EngB-Septin-like GTPase superfamily. TrmE GTPase family. As to quaternary structure, homodimer. Heterotetramer of two MnmE and two MnmG subunits. K(+) serves as cofactor.

Its subcellular location is the cytoplasm. Its function is as follows. Exhibits a very high intrinsic GTPase hydrolysis rate. Involved in the addition of a carboxymethylaminomethyl (cmnm) group at the wobble position (U34) of certain tRNAs, forming tRNA-cmnm(5)s(2)U34. The chain is tRNA modification GTPase MnmE from Roseobacter denitrificans (strain ATCC 33942 / OCh 114) (Erythrobacter sp. (strain OCh 114)).